The primary structure comprises 176 residues: Inorganic pyrophosphatase (176 aa).

Residues K30, R44, and Y56 each contribute to the substrate site. Mg(2+)-binding residues include D66, D71, and D103. Residue Y142 coordinates substrate.

It belongs to the PPase family. Homohexamer. The cofactor is Mg(2+).

Its subcellular location is the cytoplasm. The catalysed reaction is diphosphate + H2O = 2 phosphate + H(+). Its function is as follows. Catalyzes the hydrolysis of inorganic pyrophosphate (PPi) forming two phosphate ions. The protein is Inorganic pyrophosphatase of Vibrio vulnificus (strain CMCP6).